Consider the following 424-residue polypeptide: Envelope glycoprotein M (424 aa).

Residues 1–23 (MASRARMERNYRGLSHIDYVHKK) lie on the Intravirion side of the membrane. Residues 24-44 (MWVVQAVCFGIAVLVFFGTLV) traverse the membrane as a helical segment. At 45 to 94 (AASINLTEGFPCFFAAVVDYRTVNTTLVHTGLTYPRLGGVVPVLFFQTKA) the chain is on the virion surface side. A helical membrane pass occupies residues 95-115 (VVFFFYATSIVFVFLVCYITV). Topologically, residues 116 to 143 (GAIISSKKHVGAAYMGSGAFVFSLMASP) are intravirion. The chain crosses the membrane as a helical span at residues 144–164 (LTILLGTVSIWLLQAVVIVLA). The Virion surface segment spans residues 165–166 (HK). The helical transmembrane segment at 167 to 187 (LIVLAAAVYLVHFSTITFFYG) threads the bilayer. At 188–226 (YFCGRGVDSKVYAEDISSAKDIDGSLHKLIGNVRAMMVN) the chain is on the intravirion side. Residues 227 to 247 (LLSIVYSIILIMSSLMFGMLL) traverse the membrane as a helical segment. At 248 to 261 (ANSFTLKFWHVIVT) the chain is on the virion surface side. The chain crosses the membrane as a helical span at residues 262–282 (VLITTSVLTLIYLLVIEFLIA). Arg-283 is a topological domain (intravirion). The chain crosses the membrane as a helical span at residues 284 to 304 (YVHIILGAYIGLLIGYGMLWT). At 305–327 (TTCDYVNRFYYAMGANASNLRIA) the chain is on the virion surface side. Residues 328–348 (CHSVLAVFTVLILLAMVVRLI) traverse the membrane as a helical segment. At 349-424 (RASLYHRRRS…YSGSESEWDD (76 aa)) the chain is on the intravirion side. The interval 382–424 (SYKQRGSQSEDERALTQSRSAEASDEDTIYDRVYSGSESEWDD) is disordered.

Belongs to the herpesviridae glycoprotein M family. As to quaternary structure, interacts (via N-terminus) with gN (via N-terminus). The gM-gN heterodimer forms the gCII complex.

It localises to the virion membrane. The protein resides in the host Golgi apparatus. It is found in the host trans-Golgi network. The protein localises to the host endosome membrane. Its subcellular location is the host nucleus inner membrane. Envelope glycoprotein important for virion assembly and egress. Plays a role in the correct incorporation of gH-gL into virion membrane. Directs the glycoprotein N (gN) to the host trans-Golgi network. The polypeptide is Envelope glycoprotein M (Gallid herpesvirus 2 (strain Chicken/Md5/ATCC VR-987) (GaHV-2)).